The primary structure comprises 188 residues: UPF0398 protein SSP1297 (188 aa).

Belongs to the UPF0398 family.

The sequence is that of UPF0398 protein SSP1297 from Staphylococcus saprophyticus subsp. saprophyticus (strain ATCC 15305 / DSM 20229 / NCIMB 8711 / NCTC 7292 / S-41).